The sequence spans 135 residues: NAD(P)H-quinone oxidoreductase subunit 3 (135 aa).

A run of 3 helical transmembrane segments spans residues 15-35, 79-99, and 104-124; these read IVFF…SSLV, MFAL…PWAV, and LGLL…VALV.

This sequence belongs to the complex I subunit 3 family. In terms of assembly, NDH-1 can be composed of about 15 different subunits; different subcomplexes with different compositions have been identified which probably have different functions.

It is found in the cellular thylakoid membrane. It carries out the reaction a plastoquinone + NADH + (n+1) H(+)(in) = a plastoquinol + NAD(+) + n H(+)(out). It catalyses the reaction a plastoquinone + NADPH + (n+1) H(+)(in) = a plastoquinol + NADP(+) + n H(+)(out). In terms of biological role, NDH-1 shuttles electrons from an unknown electron donor, via FMN and iron-sulfur (Fe-S) centers, to quinones in the respiratory and/or the photosynthetic chain. The immediate electron acceptor for the enzyme in this species is believed to be plastoquinone. Couples the redox reaction to proton translocation, and thus conserves the redox energy in a proton gradient. Cyanobacterial NDH-1 also plays a role in inorganic carbon-concentration. In Trichodesmium erythraeum (strain IMS101), this protein is NAD(P)H-quinone oxidoreductase subunit 3.